Consider the following 285-residue polypeptide: Eukaryotic translation initiation factor 3 subunit F-2 (285 aa).

The MPN domain occupies 11 to 145; that stretch reads VFIKPLVLFQ…TRLYCAVEIG (135 aa).

It belongs to the eIF-3 subunit F family. Component of the eukaryotic translation initiation factor 3 (eIF-3) complex. The eIF-3 complex interacts with pix.

It is found in the cytoplasm. In terms of biological role, component of the eukaryotic translation initiation factor 3 (eIF-3) complex, which is involved in protein synthesis of a specialized repertoire of mRNAs and, together with other initiation factors, stimulates binding of mRNA and methionyl-tRNAi to the 40S ribosome. The eIF-3 complex specifically targets and initiates translation of a subset of mRNAs involved in cell proliferation. The polypeptide is Eukaryotic translation initiation factor 3 subunit F-2 (Drosophila yakuba (Fruit fly)).